The primary structure comprises 851 residues: Envelope glycoprotein gp160 (851 aa).

Residues 1–24 (MEPGRNQLLVAILLTSACLIYCKQ) form the signal peptide. Residues 25 to 669 (YVTVFYGIPA…LTSWIKYIQY (645 aa)) lie on the Extracellular side of the membrane. The N-linked (GlcNAc...) asparagine; by host glycan is linked to Asn37. Cys44 and Cys57 are disulfide-bonded. Residues Asn70, Asn114, Asn127, Asn134, Asn142, Asn157, Asn184, Asn195, Asn227, Asn230, Asn261, Asn267, Asn278, Asn289, Asn299, Asn355, Asn361, Asn388, Asn398, Asn401, Asn438, Asn453, and Asn456 are each glycosylated (N-linked (GlcNAc...) asparagine; by host). 5 disulfide bridges follow: Cys101–Cys203, Cys108–Cys194, Cys113–Cys154, Cys216–Cys246, and Cys226–Cys238. The V1 stretch occupies residues 113–153 (CNITSGTTATPSPPNITIIDENSTCIGDNNCTGLGKEEVVE). Residues 154–194 (CEFNMTGLEQDKKRKYNDAWYSRDVVCDKTNGTGTCYMRHC) are V2. A V3 region spans residues 294–327 (CKRPGNKTVVPITLMSGRRFHSRPVYNKKPGQAW). Residues Cys294 and Cys328 are joined by a disulfide bond. 2 disulfides stabilise this stretch: Cys380/Cys437 and Cys387/Cys410. The V4 stretch occupies residues 387 to 410 (CNMTWFLNWVENKTNQTHGNYAPC). The tract at residues 453–459 (NQTNITF) is V5. The fusion peptide stretch occupies residues 502-522 (GVFVLGFLGFLATAGSAMGGA). The interval 565 to 581 (LQARVTAIEKYLKDQAQ) is immunosuppression. N-linked (GlcNAc...) asparagine; by host glycans are attached at residues Asn601, Asn610, and Asn626. An MPER; binding to GalCer region spans residues 647 to 668 (KLNSWDVFGNWFDLTSWIKYIQ). The chain crosses the membrane as a helical span at residues 670–690 (GVYIVVGIIGLRIAIYIVQLL). At 691-851 (SRLRKGYRPV…IRQGAEIALL (161 aa)) the chain is on the cytoplasmic side. A YXXV motif; contains endocytosis signal motif is present at residues 697-700 (YRPV). A lipid anchor (S-palmitoyl cysteine; by host) is attached at Cys763. Positions 850 to 851 (LL) match the Di-leucine internalization motif motif.

The mature envelope protein (Env) consists of a homotrimer of non-covalently associated gp120-gp41 heterodimers. The resulting complex protrudes from the virus surface as a spike. There seems to be as few as 10 spikes on the average virion. Interacts with human CD4, CCR5 and CXCR4, to form a P4HB/PDI-CD4-CXCR4-gp120 complex. Gp120 also interacts with the C-type lectins CD209/DC-SIGN and CLEC4M/DC-SIGNR (collectively referred to as DC-SIGN(R)). Gp120 and gp41 interact with GalCer. In terms of assembly, the mature envelope protein (Env) consists of a homotrimer of non-covalently associated gp120-gp41 heterodimers. The resulting complex protrudes from the virus surface as a spike. There seems to be as few as 10 spikes on the average virion. Specific enzymatic cleavages in vivo yield mature proteins. Envelope glycoproteins are synthesized as an inactive precursor that is heavily N-glycosylated and processed likely by host cell furin in the Golgi to yield the mature SU and TM proteins. The cleavage site between SU and TM requires the minimal sequence [KR]-X-[KR]-R. Post-translationally, palmitoylation of the transmembrane protein and of Env polyprotein (prior to its proteolytic cleavage) is essential for their association with host cell membrane lipid rafts. Palmitoylation is therefore required for envelope trafficking to classical lipid rafts, but not for viral replication.

The protein localises to the virion membrane. It is found in the host cell membrane. It localises to the host endosome membrane. Its function is as follows. The surface protein gp120 (SU) attaches the virus to the host lymphoid cell by binding to the primary receptor CD4. This interaction induces a structural rearrangement creating a high affinity binding site for a chemokine coreceptor like CXCR4 and/or CCR5. This peculiar 2 stage receptor-interaction strategy allows gp120 to maintain the highly conserved coreceptor-binding site in a cryptic conformation, protected from neutralizing antibodies. Since CD4 also displays a binding site for the disulfide-isomerase P4HB/PDI, a P4HB/PDI-CD4-CXCR4-gp120 complex may form. In that complex, P4HB/PDI could reach and reduce gp120 disulfide bonds, causing major conformational changes in gp120. TXN, another PDI family member could also be involved in disulfide rearrangements in Env during fusion. These changes are transmitted to the transmembrane protein gp41 and are thought to activate its fusogenic potential by unmasking its fusion peptide. In terms of biological role, the surface protein gp120 is a ligand for CD209/DC-SIGN and CLEC4M/DC-SIGNR, which are respectively found on dendritic cells (DCs), and on endothelial cells of liver sinusoids and lymph node sinuses. These interactions allow capture of viral particles at mucosal surfaces by these cells and subsequent transmission to permissive cells. DCs are professional antigen presenting cells, critical for host immunity by inducing specific immune responses against a broad variety of pathogens. They act as sentinels in various tissues where they take up antigen, process it, and present it to T-cells following migration to lymphoid organs. HIV subverts the migration properties of dendritic cells to gain access to CD4+ T-cells in lymph nodes. Virus transmission to permissive T-cells occurs either in trans (without DCs infection, through viral capture and transmission), or in cis (following DCs productive infection, through the usual CD4-gp120 interaction), thereby inducing a robust infection. In trans infection, bound virions remain infectious over days and it is proposed that they are not degraded, but protected in non-lysosomal acidic organelles within the DCs close to the cell membrane thus contributing to the viral infectious potential during DCs' migration from the periphery to the lymphoid tissues. On arrival at lymphoid tissues, intact virions recycle back to DCs' cell surface allowing virus transmission to CD4+ T-cells. Virion capture also seems to lead to MHC-II-restricted viral antigen presentation, and probably to the activation of HIV-specific CD4+ cells. The transmembrane protein gp41 (TM) acts as a class I viral fusion protein. Under the current model, the protein has at least 3 conformational states: pre-fusion native state, pre-hairpin intermediate state, and post-fusion hairpin state. During fusion of viral and target intracellular membranes, the coiled coil regions (heptad repeats) assume a trimer-of-hairpins structure, positioning the fusion peptide in close proximity to the C-terminal region of the ectodomain. The formation of this structure appears to drive apposition and subsequent fusion of viral and target cell membranes. Complete fusion occurs in host cell endosomes and is dynamin-dependent, however some lipid transfer might occur at the plasma membrane. The virus undergoes clathrin-dependent internalization long before endosomal fusion, thus minimizing the surface exposure of conserved viral epitopes during fusion and reducing the efficacy of inhibitors targeting these epitopes. Membranes fusion leads to delivery of the nucleocapsid into the cytoplasm. Functionally, the envelope glycoprotein gp160 precursor down-modulates cell surface CD4 antigen by interacting with it in the endoplasmic reticulum and blocking its transport to the cell surface. Its function is as follows. The gp120-gp41 heterodimer seems to contribute to T-cell depletion during HIV-1 infection. The envelope glycoproteins expressed on the surface of infected cells induce apoptosis through an interaction with uninfected cells expressing the receptor (CD4) and the coreceptors CXCR4 or CCR5. This type of bystander killing may be obtained by at least three distinct mechanisms. First, the interaction between the 2 cells can induce cellular fusion followed by nuclear fusion within the syncytium. Syncytia are condemned to die from apoptosis. Second, the 2 interacting cells may not fuse entirely and simply exchange plasma membrane lipids, after a sort of hemifusion process, followed by rapid death. Third, it is possible that virus-infected cells, on the point of undergoing apoptosis, fuse with CD4-expressing cells, in which case apoptosis is rapidly transmitted from one cell to the other and thus occurs in a sort of contagious fashion. In terms of biological role, the gp120-gp41 heterodimer allows rapid transcytosis of the virus through CD4 negative cells such as simple epithelial monolayers of the intestinal, rectal and endocervical epithelial barriers. Both gp120 and gp41 specifically recognize glycosphingolipids galactosyl-ceramide (GalCer) or 3' sulfo-galactosyl-ceramide (GalS) present in the lipid rafts structures of epithelial cells. Binding to these alternative receptors allows the rapid transcytosis of the virus through the epithelial cells. This transcytotic vesicle-mediated transport of virions from the apical side to the basolateral side of the epithelial cells does not involve infection of the cells themselves. This is Envelope glycoprotein gp160 (env) from Human immunodeficiency virus type 2 subtype A (isolate D194) (HIV-2).